A 130-amino-acid chain; its full sequence is RutC family protein slr0709 (130 aa).

This sequence belongs to the RutC family.

The chain is RutC family protein slr0709 from Synechocystis sp. (strain ATCC 27184 / PCC 6803 / Kazusa).